The sequence spans 66 residues: Large ribosomal subunit protein bL35 (66 aa).

The tract at residues 25–45 is disordered; sequence QAAGKRHGMSKRPQKMKRNAR. Positions 28-44 are enriched in basic residues; sequence GKRHGMSKRPQKMKRNA.

This sequence belongs to the bacterial ribosomal protein bL35 family.

The sequence is that of Large ribosomal subunit protein bL35 from Rhodospirillum centenum (strain ATCC 51521 / SW).